We begin with the raw amino-acid sequence, 438 residues long: Phosphoribosylamine--glycine ligase (438 aa).

In terms of domain architecture, ATP-grasp spans 108–316 (REFMERNDIP…LVEIAEGIVK (209 aa)). 135–194 (IDEYGKPVVVKPLGLTGGKGVKVVGYQLKDNEEAKEYAEYLIKKDGKVLIEERTDGVEFT) is an ATP binding site. Mg(2+) is bound by residues Gln-274, Glu-286, and Asn-288. Mn(2+) contacts are provided by Gln-274, Glu-286, and Asn-288.

Belongs to the GARS family. Requires Mg(2+) as cofactor. Mn(2+) is required as a cofactor.

It carries out the reaction 5-phospho-beta-D-ribosylamine + glycine + ATP = N(1)-(5-phospho-beta-D-ribosyl)glycinamide + ADP + phosphate + H(+). The protein operates within purine metabolism; IMP biosynthesis via de novo pathway; N(1)-(5-phospho-D-ribosyl)glycinamide from 5-phospho-alpha-D-ribose 1-diphosphate: step 2/2. This is Phosphoribosylamine--glycine ligase from Pyrococcus abyssi (strain GE5 / Orsay).